Reading from the N-terminus, the 180-residue chain is Large ribosomal subunit protein uL5 (180 aa).

Belongs to the universal ribosomal protein uL5 family. As to quaternary structure, part of the 50S ribosomal subunit; part of the 5S rRNA/L5/L18/L25 subcomplex. Contacts the 5S rRNA and the P site tRNA. Forms a bridge to the 30S subunit in the 70S ribosome.

Functionally, this is one of the proteins that bind and probably mediate the attachment of the 5S RNA into the large ribosomal subunit, where it forms part of the central protuberance. In the 70S ribosome it contacts protein S13 of the 30S subunit (bridge B1b), connecting the 2 subunits; this bridge is implicated in subunit movement. Contacts the P site tRNA; the 5S rRNA and some of its associated proteins might help stabilize positioning of ribosome-bound tRNAs. In Cupriavidus metallidurans (strain ATCC 43123 / DSM 2839 / NBRC 102507 / CH34) (Ralstonia metallidurans), this protein is Large ribosomal subunit protein uL5.